Consider the following 267-residue polypeptide: Glutamate 5-kinase (267 aa).

ATP is bound at residue Lys14. Residues Ser54, Asp141, and Asn157 each coordinate substrate. Residues 177-178 (SD) and 219-225 (TGGMMSK) contribute to the ATP site.

The protein belongs to the glutamate 5-kinase family.

It is found in the cytoplasm. The catalysed reaction is L-glutamate + ATP = L-glutamyl 5-phosphate + ADP. It functions in the pathway amino-acid biosynthesis; L-proline biosynthesis; L-glutamate 5-semialdehyde from L-glutamate: step 1/2. Functionally, catalyzes the transfer of a phosphate group to glutamate to form L-glutamate 5-phosphate. The chain is Glutamate 5-kinase from Streptococcus thermophilus (strain CNRZ 1066).